Consider the following 206-residue polypeptide: Ectodysplasin-A receptor-associated adapter protein (206 aa).

Disordered stretches follow at residues 1–36 (MRPL…DKYP) and 52–77 (TLNC…TGDP). Composition is skewed to polar residues over residues 24–33 (PSTLSFNTSD) and 52–62 (TLNCPPNSDMK). Residues 114–190 (DVIRIKLDPC…DVEKVLRRWV (77 aa)) form the Death domain.

Self-associates and binds to EDAR, TRAF1, TRAF2 and TRAF3.

The protein localises to the cytoplasm. Adapter protein that interacts with EDAR DEATH domain and couples the receptor to EDA signaling pathway during morphogenesis of ectodermal organs. Mediates the activation of NF-kappa-B. In Macaca fascicularis (Crab-eating macaque), this protein is Ectodysplasin-A receptor-associated adapter protein (EDARADD).